Consider the following 186-residue polypeptide: Single-stranded DNA-binding protein 1 (186 aa).

Residues 1–108 (MDATVTVVGN…LEIDEIGPTL (108 aa)) form the SSB domain. Positions 120 to 186 (QAGHGVSPDP…EDFDSDEVPF (67 aa)) are disordered. Residues 132–141 (DSQTGQGIDS) are compositionally biased toward polar residues. Over residues 175-186 (SYEDFDSDEVPF) the composition is skewed to acidic residues.

Homotetramer.

The polypeptide is Single-stranded DNA-binding protein 1 (ssb1) (Tropheryma whipplei (strain TW08/27) (Whipple's bacillus)).